The chain runs to 309 residues: Taste receptor type 2 member 43 (309 aa).

A topological domain (extracellular) is located at residue methionine 1. Residues isoleucine 2–phenylalanine 22 form a helical membrane-spanning segment. The Cytoplasmic segment spans residues alanine 23–glutamine 46. A helical transmembrane segment spans residues isoleucine 47–tyrosine 67. Residues serine 68–asparagine 86 lie on the Extracellular side of the membrane. The helical transmembrane segment at isoleucine 87–leucine 107 threads the bilayer. Residues leucine 108–lysine 126 are Cytoplasmic-facing. The chain crosses the membrane as a helical span at residues serine 127–isoleucine 147. Residues asparagine 148–threonine 178 are Extracellular-facing. Residues asparagine 161 and asparagine 176 are each glycosylated (N-linked (GlcNAc...) asparagine). The chain crosses the membrane as a helical span at residues valine 179 to isoleucine 199. At cysteine 200 to glutamine 229 the chain is on the cytoplasmic side. The chain crosses the membrane as a helical span at residues threonine 230–tryptophan 250. At serine 251–proline 259 the chain is on the extracellular side. A helical membrane pass occupies residues valine 260–isoleucine 280. Over tryptophan 281–proline 309 the chain is Cytoplasmic.

The protein belongs to the G-protein coupled receptor T2R family.

It localises to the membrane. The protein localises to the cell projection. Its subcellular location is the cilium membrane. Functionally, gustducin-coupled receptor immplicated in the perception of bitter compounds in the oral cavity and the gastrointestinal tract. Signals through PLCB2 and the calcium-regulated cation channel TRPM5. Activated by the sulfonyl amide sweeteners saccharin and acesulfame K. In airway epithelial cells, binding of bitter compounds increases the intracellular calcium ion concentration and stimulates ciliary beat frequency. May act as chemosensory receptors in airway epithelial cells to detect and eliminate potential noxious agents from the airways. In Pan troglodytes (Chimpanzee), this protein is Taste receptor type 2 member 43 (TAS2R43).